Here is a 400-residue protein sequence, read N- to C-terminus: MSLYRTFTANDAVEYARQFGGVSQPQTLVAAEEIGDGNLNLVFKIKDETGVSRVIVKQALPYVRCVGESWPLTLDRARIEAETLLTHARFCPQHTVTVLYHDPELAVMVQEDLSDHRIWRSELVKGADYPQAAAQLGEYLAQTLFHTSDFHQHPHEKKAAVSQFTNPELCQITEDLFFTDPYIEHERNQFDAALTPDVQALRDDKALKLAVAGLKHGFLSKAEALLHGDIHSGSIFVAEGRLKAIDAEFGFYGPIGFDVGTAIGNLLLNYCGLPGLLAPREAAAGRERRLEDIRTLWQTFSARFLALSDNESRDPALAESGYAALFLQQVWRDAVGYCGTELIRRTIGLAHVADLDSIQETEARLACQRHAISLGRTLVLAAPHIADVDALLARVRQSGA.

ATP-binding positions include N40, K57, and 111-113 (EDL). D229 lines the substrate pocket. ATP is bound at residue 246-248 (DAE). Residue R344 coordinates substrate.

It belongs to the methylthioribose kinase family. As to quaternary structure, homodimer.

It carries out the reaction 5-(methylsulfanyl)-D-ribose + ATP = 5-(methylsulfanyl)-alpha-D-ribose 1-phosphate + ADP + H(+). It functions in the pathway amino-acid biosynthesis; L-methionine biosynthesis via salvage pathway; S-methyl-5-thio-alpha-D-ribose 1-phosphate from S-methyl-5'-thioadenosine (hydrolase route): step 2/2. Catalyzes the phosphorylation of methylthioribose into methylthioribose-1-phosphate. The sequence is that of Methylthioribose kinase from Pectobacterium carotovorum subsp. carotovorum (strain PC1).